Consider the following 692-residue polypeptide: Elongation factor G (692 aa).

One can recognise a tr-type G domain in the interval 8-282; it reads EKTRNIGIMA…AIVDFLPAPT (275 aa). GTP contacts are provided by residues 17–24, 81–85, and 135–138; these read AHIDAGKT, DTPGH, and NKMD.

Belongs to the TRAFAC class translation factor GTPase superfamily. Classic translation factor GTPase family. EF-G/EF-2 subfamily.

It localises to the cytoplasm. In terms of biological role, catalyzes the GTP-dependent ribosomal translocation step during translation elongation. During this step, the ribosome changes from the pre-translocational (PRE) to the post-translocational (POST) state as the newly formed A-site-bound peptidyl-tRNA and P-site-bound deacylated tRNA move to the P and E sites, respectively. Catalyzes the coordinated movement of the two tRNA molecules, the mRNA and conformational changes in the ribosome. The polypeptide is Elongation factor G (Moorella thermoacetica (strain ATCC 39073 / JCM 9320)).